The sequence spans 145 residues: Putative pre-16S rRNA nuclease (145 aa).

The protein belongs to the YqgF nuclease family.

The protein localises to the cytoplasm. Its function is as follows. Could be a nuclease involved in processing of the 5'-end of pre-16S rRNA. This Levilactobacillus brevis (strain ATCC 367 / BCRC 12310 / CIP 105137 / JCM 1170 / LMG 11437 / NCIMB 947 / NCTC 947) (Lactobacillus brevis) protein is Putative pre-16S rRNA nuclease.